The chain runs to 301 residues: Rhodopsin (301 aa).

Topologically, residues Leu-1 to Met-18 are extracellular. The helical transmembrane segment at Tyr-19 to Val-43 threads the bilayer. The Cytoplasmic segment spans residues Phe-44–Asn-55. A helical membrane pass occupies residues Leu-56–Val-78. Residues Thr-79–Cys-92 lie on the Extracellular side of the membrane. A disulfide bridge links Cys-92 with Cys-169. Residues Gln-93–Phe-115 traverse the membrane as a helical segment. Positions Asp-116–Tyr-118 match the 'Ionic lock' involved in activated form stabilization motif. Topologically, residues Asp-116 to Lys-134 are cytoplasmic. A helical transmembrane segment spans residues Ala-135–Phe-155. Residues Gly-156–Ser-182 are Extracellular-facing. N-linked (GlcNAc...) asparagine glycosylation occurs at Asn-165. The chain crosses the membrane as a helical span at residues Tyr-183–Val-204. The Cytoplasmic segment spans residues Phe-205 to Lys-245. Residues Ile-246–Val-267 traverse the membrane as a helical segment. The Extracellular segment spans residues Gly-268–Val-278. A helical membrane pass occupies residues Tyr-279 to Ile-300. Lys-288 carries the post-translational modification N6-(retinylidene)lysine.

This sequence belongs to the G-protein coupled receptor 1 family. Opsin subfamily. In terms of assembly, homodimer. Interacts with GNAQ. In terms of processing, contains one covalently linked retinal chromophore.

The protein resides in the cell projection. It is found in the rhabdomere membrane. Its function is as follows. Photoreceptor required for image-forming vision at low light intensity. Can use both retinal and 3-dehydroretinal as visual pigment. Light-induced isomerization of 11-cis to all-trans retinal triggers a conformational change that activates signaling via G-proteins. Signaling via GNAQ probably mediates the activation of phospholipase C. The chain is Rhodopsin (RHO) from Procambarus seminolae (Crayfish).